The following is a 233-amino-acid chain: Ycf53-like protein (233 aa).

Belongs to the ycf53 family.

The polypeptide is Ycf53-like protein (Synechocystis sp. (strain ATCC 27184 / PCC 6803 / Kazusa)).